A 1169-amino-acid chain; its full sequence is DNA-directed RNA polymerase subunit beta (1169 aa).

It belongs to the RNA polymerase beta chain family. As to quaternary structure, the RNAP catalytic core consists of 2 alpha, 1 beta, 1 beta' and 1 omega subunit. When a sigma factor is associated with the core the holoenzyme is formed, which can initiate transcription. Interacts with RbpA, which partially restores Rif-inhibited transcription.

The catalysed reaction is RNA(n) + a ribonucleoside 5'-triphosphate = RNA(n+1) + diphosphate. In terms of biological role, DNA-dependent RNA polymerase catalyzes the transcription of DNA into RNA using the four ribonucleoside triphosphates as substrates. This subunit often mutates to generate rifampicin (Rif) resistance. Interaction with RbpA partially restores Rif-inhibited transcription; once the subunit is Rif-resistant however RbpA no longer stimulates transcription. The chain is DNA-directed RNA polymerase subunit beta from Mycolicibacterium smegmatis (strain ATCC 700084 / mc(2)155) (Mycobacterium smegmatis).